The chain runs to 774 residues: Potassium/sodium hyperpolarization-activated cyclic nucleotide-gated channel 3 (774 aa).

Positions 1–48 (MEAEQRPAAGASEGATPGLEAVPPVAPPPATAASGPIPKSGPEPKRRH) are disordered. Residues 1-97 (MEAEQRPAAG…PYSDFRFYWD (97 aa)) lie on the Cytoplasmic side of the membrane. The involved in subunit assembly stretch occupies residues 46 to 91 (RRHLGTLLQPTVNKFSLRVFGSHKAVEIEQERVKSAGAWIIHPYSD). Residues 98 to 118 (LIMLLLMVGNLIVLPVGITFF) traverse the membrane as a helical segment. Residues 119-124 (KEENSP) lie on the Extracellular side of the membrane. A helical transmembrane segment spans residues 125–145 (PWIVFNVLSDTFFLLDLVLNF). Residues 146–171 (RTGIVVEEGAEILLAPRAIRTRYLRT) are Cytoplasmic-facing. The helical transmembrane segment at 172-192 (WFLVDLISSIPVDYIFLVVEL) threads the bilayer. Over 193-201 (EPRLDAEVY) the chain is Extracellular. Residues 202–222 (KTARALRIVRFTKILSLLRLL) form a helical; Voltage-sensor membrane-spanning segment. At 223–253 (RLSRLIRYIHQWEEIFHMTYDLASAVVRIFN) the chain is on the cytoplasmic side. Residues 254 to 274 (LIGMMLLLCHWDGCLQFLVPM) form a helical membrane-spanning segment. Over 275–297 (LQDFPPDCWVSINHMVNHSWGRQ) the chain is Extracellular. N-linked (GlcNAc...) asparagine glycosylation occurs at Asn291. The pore-forming intramembrane region spans 298-319 (YSHALFKAMSHMLCIGYGQQAP). At 320–329 (VGMPDVWLTM) the chain is on the extracellular side. A helical membrane pass occupies residues 330–350 (LSMIVGATCYAMFIGHATALI). Residues 351-774 (QSLDSSRRQY…PRGLQLSANM (424 aa)) are Cytoplasmic-facing. The segment at 354–774 (DSSRRQYQEK…PRGLQLSANM (421 aa)) is interaction with KCTD3. 3',5'-cyclic AMP contacts are provided by Gly492, Glu493, Cys495, Arg502, Thr503, Arg543, and Arg546. Ser634 is subject to Phosphoserine. The tract at residues 682–774 (SLSRAGRSQV…PRGLQLSANM (93 aa)) is disordered. Residues 751-763 (TAQPPRPPVPEPA) show a composition bias toward pro residues.

Belongs to the potassium channel HCN family. Homotetramer. The potassium channel is composed of a homo- or heterotetrameric complex of pore-forming subunits. Interacts with HCN11. Interacts with KCTD3; this interaction increases cell surface expression and current density of this channel. Interacts with PEX5L. As to expression, detected in brain.

It localises to the cell membrane. The enzyme catalyses K(+)(in) = K(+)(out). It carries out the reaction Na(+)(in) = Na(+)(out). Its activity is regulated as follows. Unlike HCN2 and HCN4, HCN3 is insensitive to cyclic nucleotides, such as cAMP or cGMP. This lack of sensitivity of HCN3, despite harboring a functional cyclic nucleotide-binding domain (CNBD), may be explained by its shorter C-terminal sequence, which may alter the normal autoinhibition of the channel. Inhibited by Cs(1+) and ZD7288. Phosphatidylinositol-4,5-bisphosphate (PIP(2)) shifts HCN3 activation to more depolarized potentials and accelerated activation kinetics. In terms of biological role, hyperpolarization-activated ion channel that are permeable to sodium and potassium ions, with an about 3:1 preference for potassium ions. Contributes to the native pacemaker currents in heart (If) and in neurons (Ih). In particular, plays a pivotal role in maintaining excitability and promoting rhythmic burst firing within hypothalamic nuclei. Exerts a significant influence on the configuration of the cardiac action potential waveform. Does not appear to play a prominent role in the processing of acute, neuropathic, or inflammatory pain. The polypeptide is Potassium/sodium hyperpolarization-activated cyclic nucleotide-gated channel 3 (HCN3) (Homo sapiens (Human)).